Here is a 235-residue protein sequence, read N- to C-terminus: Ribonuclease 3 (235 aa).

Positions 7 to 135 constitute an RNase III domain; that stretch reads FAALEARLGH…VVAAVYLDGG (129 aa). Residue Glu-48 coordinates Mg(2+). The active site involves Asp-52. Positions 121 and 124 each coordinate Mg(2+). The active site involves Glu-124. The region spanning 160–229 is the DRBM domain; sequence DPKTVLQEWA…ASAFLAREGV (70 aa).

The protein belongs to the ribonuclease III family. Homodimer. Requires Mg(2+) as cofactor.

It localises to the cytoplasm. The enzyme catalyses Endonucleolytic cleavage to 5'-phosphomonoester.. Functionally, digests double-stranded RNA. Involved in the processing of primary rRNA transcript to yield the immediate precursors to the large and small rRNAs (23S and 16S). Processes some mRNAs, and tRNAs when they are encoded in the rRNA operon. Processes pre-crRNA and tracrRNA of type II CRISPR loci if present in the organism. This Azorhizobium caulinodans (strain ATCC 43989 / DSM 5975 / JCM 20966 / LMG 6465 / NBRC 14845 / NCIMB 13405 / ORS 571) protein is Ribonuclease 3.